Consider the following 182-residue polypeptide: Lipid A acyltransferase PagP (182 aa).

The N-terminal stretch at 1–21 (MTQYFRALAFFLLLVPATAMA) is a signal peptide. C22 carries the N-palmitoyl cysteine lipid modification. Residue C22 is the site of S-diacylglycerol cysteine attachment. Residues H55, D98, and S99 contribute to the active site.

It belongs to the lipid A palmitoyltransferase family. In terms of assembly, homodimer.

The protein localises to the cell outer membrane. The enzyme catalyses a lipid A + a 1,2-diacyl-sn-glycero-3-phosphocholine = a hepta-acyl lipid A + a 2-acyl-sn-glycero-3-phosphocholine. The catalysed reaction is a lipid IVA + a 1,2-diacyl-sn-glycero-3-phosphocholine = a lipid IVB + a 2-acyl-sn-glycero-3-phosphocholine. It catalyses the reaction a lipid IIA + a 1,2-diacyl-sn-glycero-3-phosphocholine = a lipid IIB + a 2-acyl-sn-glycero-3-phosphocholine. Its function is as follows. Transfers a fatty acid residue from the sn-1 position of a phospholipid to the N-linked hydroxyfatty acid chain on the proximal unit of lipid A or its precursors. Required for resistance to cationic antimicrobial peptides (CAMPs). Modifications of lipid A with an acyl chain to evade host immune defenses by resisting antibody-mediated complement lysis during respiratory infection. The chain is Lipid A acyltransferase PagP from Bordetella bronchiseptica (strain ATCC BAA-588 / NCTC 13252 / RB50) (Alcaligenes bronchisepticus).